Consider the following 316-residue polypeptide: L-lactate dehydrogenase 3 (316 aa).

Positions 16, 37, 42, and 68 each coordinate NAD(+). Residue Arg-91 participates in substrate binding. NAD(+) is bound by residues Ser-104, 121-123 (ASN), and Thr-146. 123-126 (NPVD) serves as a coordination point for substrate. Residue 151-154 (DSSR) participates in substrate binding. Beta-D-fructose 1,6-bisphosphate is bound by residues Arg-156 and His-171. The Proton acceptor role is filled by His-178. Thr-233 is a substrate binding site.

The protein belongs to the LDH/MDH superfamily. LDH family. As to quaternary structure, homotetramer.

It localises to the cytoplasm. It catalyses the reaction (S)-lactate + NAD(+) = pyruvate + NADH + H(+). It functions in the pathway fermentation; pyruvate fermentation to lactate; (S)-lactate from pyruvate: step 1/1. Allosterically activated by fructose 1,6-bisphosphate (FBP). In terms of biological role, catalyzes the conversion of lactate to pyruvate. The sequence is that of L-lactate dehydrogenase 3 from Bacillus anthracis.